Consider the following 319-residue polypeptide: Acetyl-coenzyme A carboxylase carboxyl transferase subunit alpha (319 aa).

A CoA carboxyltransferase C-terminal domain is found at 35–296; the sequence is DLEKEIKQLE…KQRLLEQLKE (262 aa).

This sequence belongs to the AccA family. In terms of assembly, acetyl-CoA carboxylase is a heterohexamer composed of biotin carboxyl carrier protein (AccB), biotin carboxylase (AccC) and two subunits each of ACCase subunit alpha (AccA) and ACCase subunit beta (AccD).

Its subcellular location is the cytoplasm. The catalysed reaction is N(6)-carboxybiotinyl-L-lysyl-[protein] + acetyl-CoA = N(6)-biotinyl-L-lysyl-[protein] + malonyl-CoA. It participates in lipid metabolism; malonyl-CoA biosynthesis; malonyl-CoA from acetyl-CoA: step 1/1. Component of the acetyl coenzyme A carboxylase (ACC) complex. First, biotin carboxylase catalyzes the carboxylation of biotin on its carrier protein (BCCP) and then the CO(2) group is transferred by the carboxyltransferase to acetyl-CoA to form malonyl-CoA. This is Acetyl-coenzyme A carboxylase carboxyl transferase subunit alpha from Aliivibrio fischeri (strain MJ11) (Vibrio fischeri).